Here is a 150-residue protein sequence, read N- to C-terminus: UPF0756 membrane protein ABSDF1616 (150 aa).

A run of 4 helical transmembrane segments spans residues 1 to 21 (MLAQFDVNLVVLLVLLICGLL), 45 to 65 (FFPYIQAHGLNLGILILTIGV), 83 to 103 (FISFKSLVAIAIGLLVAWLGG), and 115 to 135 (VVAGLLIGTVAGVALLRGVPV).

Belongs to the UPF0756 family.

The protein resides in the cell membrane. This is UPF0756 membrane protein ABSDF1616 from Acinetobacter baumannii (strain SDF).